Consider the following 385-residue polypeptide: Glucans biosynthesis protein C (385 aa).

A run of 10 helical transmembrane segments spans residues 17–37, 60–80, 91–111, 137–157, 173–193, 212–232, 239–259, 274–294, 311–331, and 338–358; these read AWLM…SHTW, MQVF…RYPL, VGIP…IMLQ, ISHL…VWIF, KFSM…YAVI, FIVM…LAFI, LFTT…VAYL, TESV…FSFG, ASLF…AYIT, and WLGF…LYEI.

The protein belongs to the acyltransferase 3 family. OpgC subfamily.

Its subcellular location is the cell membrane. It functions in the pathway glycan metabolism; osmoregulated periplasmic glucan (OPG) biosynthesis. Necessary for the succinyl substitution of periplasmic glucans. Could catalyze the transfer of succinyl residues from the cytoplasmic side of the membrane to the nascent glucan backbones on the periplasmic side of the membrane. In Escherichia coli O139:H28 (strain E24377A / ETEC), this protein is Glucans biosynthesis protein C.